A 499-amino-acid chain; its full sequence is Hepatic triacylglycerol lipase (499 aa).

The signal sequence occupies residues 1–21; sequence MGSPLCVPIFLAVCILIQSST. N-linked (GlcNAc...) asparagine glycosylation is present at N78. S168 acts as the Nucleophile in catalysis. The active-site Charge relay system is D194. The essential for determining substrate specificity stretch occupies residues 254–277; that stretch reads CHFLELYKHIAQHGLNALSQTIKC. H279 serves as the catalytic Charge relay system. In terms of domain architecture, PLAT spans 352–486; that stretch reads YHYQFKIQFI…HPTQEKNFVR (135 aa). The N-linked (GlcNAc...) asparagine glycan is linked to N397.

It belongs to the AB hydrolase superfamily. Lipase family. Homodimer.

It is found in the secreted. It catalyses the reaction a triacylglycerol + H2O = a diacylglycerol + a fatty acid + H(+). The enzyme catalyses a 1-acyl-sn-glycero-3-phosphocholine + H2O = sn-glycerol 3-phosphocholine + a fatty acid + H(+). The catalysed reaction is a 1,2-diacyl-sn-glycero-3-phosphocholine + H2O = a 2-acyl-sn-glycero-3-phosphocholine + a fatty acid + H(+). It carries out the reaction 1,2,3-tri-(9Z-octadecenoyl)-glycerol + H2O = di-(9Z)-octadecenoylglycerol + (9Z)-octadecenoate + H(+). It catalyses the reaction 1,2-di-(9Z-octadecenoyl)-sn-glycero-3-phosphocholine + H2O = (9Z-octadecenoyl)-sn-glycero-3-phosphocholine + (9Z)-octadecenoate + H(+). The enzyme catalyses 1,2,3-tributanoylglycerol + H2O = dibutanoylglycerol + butanoate + H(+). The catalysed reaction is 1,2-dihexadecanoyl-sn-glycero-3-phosphocholine + H2O = hexadecanoyl-sn-glycero-3-phosphocholine + hexadecanoate + H(+). It carries out the reaction 1,2-di-(9Z-octadecenoyl)-sn-glycerol + H2O = 2-(9Z-octadecenoyl)-glycerol + (9Z)-octadecenoate + H(+). It catalyses the reaction 1,2,3-tri-(9Z-octadecenoyl)-glycerol + H2O = 2,3-di-(9Z)-octadecenoyl-sn-glycerol + (9Z)-octadecenoate + H(+). The enzyme catalyses 1-(9Z-octadecenoyl)-sn-glycero-3-phospho-L-serine + H2O = sn-glycero-3-phospho-L-serine + (9Z)-octadecenoate + H(+). The catalysed reaction is 1-hexadecanoyl-sn-glycero-3-phosphocholine + H2O = sn-glycerol 3-phosphocholine + hexadecanoate + H(+). It carries out the reaction 1,3-di-(9Z-octadecenoyl)-glycerol + H2O = 3-(9Z-octadecenoyl)-sn-glycerol + (9Z)-octadecenoate + H(+). Functionally, catalyzes the hydrolysis of triglycerides and phospholipids present in circulating plasma lipoproteins, including chylomicrons, intermediate density lipoproteins (IDL), low density lipoproteins (LDL) of large size and high density lipoproteins (HDL), releasing free fatty acids (FFA) and smaller lipoprotein particles. Also exhibits lysophospholipase activity. Can hydrolyze both neutral lipid and phospholipid substrates but shows a greater binding affinity for neutral lipid substrates than phospholipid substrates. In native LDL, preferentially hydrolyzes the phosphatidylcholine species containing polyunsaturated fatty acids at sn-2 position. This chain is Hepatic triacylglycerol lipase (LIPC), found in Oryctolagus cuniculus (Rabbit).